A 302-amino-acid polypeptide reads, in one-letter code: MNVSVVTERRTPAYSSLAAGELNGLVARALLTEARLTPKPGLVDIRNSGAHRDMDLAAFERSTTAIAPWMEKFFIMGNNTAALAAENVLVMLRPLGMACENDMLQATNGVNTHRGAIFAFGLLSAAIGRLIARGEPLEQNRICDQVARLSRNIVAHELSAKKAGKLTKSETHFQCYGLSGARGEAESGFRTVRTQALPVFNRVVQEHDDTHLALLQTLLHLMAWNDDTNLVSRGGLEGLYYVQQQAQKLLWQGGVLVEGGIEAMQSLDDELILRNLSPGGSADLLAVTWFLSHFPAGSLYPE.

It belongs to the CitG/MdcB family.

The catalysed reaction is 3'-dephospho-CoA + ATP = 2'-(5''-triphospho-alpha-D-ribosyl)-3'-dephospho-CoA + adenine. The sequence is that of Probable 2-(5''-triphosphoribosyl)-3'-dephosphocoenzyme-A synthase from Salmonella gallinarum (strain 287/91 / NCTC 13346).